A 562-amino-acid chain; its full sequence is Dihydroxy-acid dehydratase (562 aa).

A Mg(2+)-binding site is contributed by D80. C121 contributes to the [2Fe-2S] cluster binding site. 2 residues coordinate Mg(2+): D122 and K123. K123 bears the N6-carboxylysine mark. Residue C194 coordinates [2Fe-2S] cluster. A Mg(2+)-binding site is contributed by E446. S472 acts as the Proton acceptor in catalysis.

This sequence belongs to the IlvD/Edd family. Homodimer. It depends on [2Fe-2S] cluster as a cofactor. Mg(2+) serves as cofactor.

It catalyses the reaction (2R)-2,3-dihydroxy-3-methylbutanoate = 3-methyl-2-oxobutanoate + H2O. It carries out the reaction (2R,3R)-2,3-dihydroxy-3-methylpentanoate = (S)-3-methyl-2-oxopentanoate + H2O. It functions in the pathway amino-acid biosynthesis; L-isoleucine biosynthesis; L-isoleucine from 2-oxobutanoate: step 3/4. It participates in amino-acid biosynthesis; L-valine biosynthesis; L-valine from pyruvate: step 3/4. In terms of biological role, functions in the biosynthesis of branched-chain amino acids. Catalyzes the dehydration of (2R,3R)-2,3-dihydroxy-3-methylpentanoate (2,3-dihydroxy-3-methylvalerate) into 2-oxo-3-methylpentanoate (2-oxo-3-methylvalerate) and of (2R)-2,3-dihydroxy-3-methylbutanoate (2,3-dihydroxyisovalerate) into 2-oxo-3-methylbutanoate (2-oxoisovalerate), the penultimate precursor to L-isoleucine and L-valine, respectively. This Staphylococcus aureus (strain USA300 / TCH1516) protein is Dihydroxy-acid dehydratase.